Reading from the N-terminus, the 525-residue chain is Apolipoprotein N-acyltransferase 2 (525 aa).

A run of 6 helical transmembrane segments spans residues 25–45 (ILNFGSAIAGFSGLVLVYYAL), 56–76 (FLYGFFVSFVHLMSSFWLAFF), 81–101 (IFTLGASTLAYFFIAMPFGFL), 115–135 (FFFAAIWLLWEFAKSTGFLAY), 153–173 (FVDITGVWGLSFIVPLIAACL), and 200–220 (LIFTAFLVLIINIYGITILSI). Residues 228–486 (LNTVIVQQNT…AESVYTEVPV (259 aa)) enclose the CN hydrolase domain. The active-site Proton acceptor is Glu-274. Residue Lys-339 is part of the active site. Cys-397 acts as the Nucleophile in catalysis. A helical transmembrane segment spans residues 495–515 (ASYKDWLPIMMFLILIFNIFL).

Belongs to the CN hydrolase family. Apolipoprotein N-acyltransferase subfamily.

It is found in the cell inner membrane. It catalyses the reaction N-terminal S-1,2-diacyl-sn-glyceryl-L-cysteinyl-[lipoprotein] + a glycerophospholipid = N-acyl-S-1,2-diacyl-sn-glyceryl-L-cysteinyl-[lipoprotein] + a 2-acyl-sn-glycero-3-phospholipid + H(+). It participates in protein modification; lipoprotein biosynthesis (N-acyl transfer). Catalyzes the phospholipid dependent N-acylation of the N-terminal cysteine of apolipoprotein, the last step in lipoprotein maturation. The protein is Apolipoprotein N-acyltransferase 2 of Treponema denticola (strain ATCC 35405 / DSM 14222 / CIP 103919 / JCM 8153 / KCTC 15104).